The chain runs to 337 residues: Holliday junction branch migration complex subunit RuvB (337 aa).

A large ATPase domain (RuvB-L) region spans residues Ala-4–Tyr-186. Residues Ile-25, Arg-26, Gly-67, Lys-70, Thr-71, Thr-72, Glu-133 to Tyr-135, Arg-176, Tyr-186, and Arg-223 each bind ATP. A Mg(2+)-binding site is contributed by Thr-71. The interval Lys-187 to Asp-257 is small ATPAse domain (RuvB-S). Residues Val-260–Lys-337 are head domain (RuvB-H). Residues Arg-315 and Arg-320 each contribute to the DNA site.

This sequence belongs to the RuvB family. Homohexamer. Forms an RuvA(8)-RuvB(12)-Holliday junction (HJ) complex. HJ DNA is sandwiched between 2 RuvA tetramers; dsDNA enters through RuvA and exits via RuvB. An RuvB hexamer assembles on each DNA strand where it exits the tetramer. Each RuvB hexamer is contacted by two RuvA subunits (via domain III) on 2 adjacent RuvB subunits; this complex drives branch migration. In the full resolvosome a probable DNA-RuvA(4)-RuvB(12)-RuvC(2) complex forms which resolves the HJ.

Its subcellular location is the cytoplasm. It carries out the reaction ATP + H2O = ADP + phosphate + H(+). In terms of biological role, the RuvA-RuvB-RuvC complex processes Holliday junction (HJ) DNA during genetic recombination and DNA repair, while the RuvA-RuvB complex plays an important role in the rescue of blocked DNA replication forks via replication fork reversal (RFR). RuvA specifically binds to HJ cruciform DNA, conferring on it an open structure. The RuvB hexamer acts as an ATP-dependent pump, pulling dsDNA into and through the RuvAB complex. RuvB forms 2 homohexamers on either side of HJ DNA bound by 1 or 2 RuvA tetramers; 4 subunits per hexamer contact DNA at a time. Coordinated motions by a converter formed by DNA-disengaged RuvB subunits stimulates ATP hydrolysis and nucleotide exchange. Immobilization of the converter enables RuvB to convert the ATP-contained energy into a lever motion, pulling 2 nucleotides of DNA out of the RuvA tetramer per ATP hydrolyzed, thus driving DNA branch migration. The RuvB motors rotate together with the DNA substrate, which together with the progressing nucleotide cycle form the mechanistic basis for DNA recombination by continuous HJ branch migration. Branch migration allows RuvC to scan DNA until it finds its consensus sequence, where it cleaves and resolves cruciform DNA. The sequence is that of Holliday junction branch migration complex subunit RuvB from Aliivibrio salmonicida (strain LFI1238) (Vibrio salmonicida (strain LFI1238)).